The primary structure comprises 199 residues: mRNA export protein mlo3 (199 aa).

The disordered stretch occupies residues 1–41; the sequence is MSMELDQSLDAIIASKPKGGIRKRRARSNKPKPTKNAKPAV. Over residues 19 to 35 the composition is skewed to basic residues; it reads GGIRKRRARSNKPKPTK. An RRM domain is found at 55-134; that stretch reads SKIIVSNLPT…RKMKVEIILD (80 aa). A disordered region spans residues 144–199; the sequence is ARVSPASNASATASKNGAKSSKRKTTRRRRTPNRPKKSAEELDKEMDDYFGSNEKE. A compositionally biased stretch (polar residues) spans 148 to 161; sequence PASNASATASKNGA. Positions 163 to 179 are enriched in basic residues; it reads SSKRKTTRRRRTPNRPK.

In terms of assembly, interacts with rpn15/dss1, mex67 and uap56.

It is found in the nucleus. In terms of biological role, has a role in the mRNA export process. Interferes with mitotic chromosome segregation when overexpressed. This is mRNA export protein mlo3 (mlo3) from Schizosaccharomyces pombe (strain 972 / ATCC 24843) (Fission yeast).